The following is a 390-amino-acid chain: cAMP-dependent protein kinase regulatory subunit (390 aa).

The span at 1–17 shows a compositional bias: polar residues; it reads MSASGFTSPFGANSNPF. Positions 1–81 are disordered; sequence MSASGFTSPF…RPQNPDGYPA (81 aa). The segment at 1–129 is dimerization and phosphorylation; it reads MSASGFTSPF…RLKKAIQGNF (129 aa). Residue Ser90 is modified to Phosphoserine. 3',5'-cyclic AMP is bound by residues 130-261, Glu208, Arg217, 262-383, Glu329, and Arg338; these read LFSH…EEVP and ILST…GVEE.

It belongs to the cAMP-dependent kinase regulatory chain family. In terms of assembly, tetramer, composed of 2 regulatory (R) and 2 catalytic (C) subunits. In the presence of cAMP it dissociates into 2 active monomeric C subunits and an R dimer.

The polypeptide is cAMP-dependent protein kinase regulatory subunit (SUM1) (Pyricularia oryzae (strain 70-15 / ATCC MYA-4617 / FGSC 8958) (Rice blast fungus)).